The sequence spans 434 residues: CCA tRNA nucleotidyltransferase 1, mitochondrial (434 aa).

Residues 1–41 constitute a mitochondrion transit peptide; sequence MQSVLYPWHRQVLRCSWSRLCLLKRYLFTMKLQSPEFQSLF. Residues G64 and R67 each coordinate ATP. The CTP site is built by G64 and R67. Mg(2+) is bound by residues D77 and D79. Residues R151, D194, R197, R200, and R203 each coordinate ATP. CTP is bound by residues R151, D194, R197, R200, and R203. The residue at position 400 (S400) is a Phosphoserine. K402 carries the post-translational modification N6-acetyllysine.

Belongs to the tRNA nucleotidyltransferase/poly(A) polymerase family. As to quaternary structure, monomer, and homodimer. It depends on Mg(2+) as a cofactor.

Its subcellular location is the mitochondrion. The protein resides in the cytoplasm. It localises to the nucleus. The enzyme catalyses a tRNA precursor + 2 CTP + ATP = a tRNA with a 3' CCA end + 3 diphosphate. The catalysed reaction is a tRNA with a 3' CCA end + 2 CTP + ATP = a tRNA with a 3' CCACCA end + 3 diphosphate. Nucleotidyltransferase that catalyzes the addition and repair of the essential 3'-terminal CCA sequence in tRNAs, which is necessary for the attachment of amino acids to the 3' terminus of tRNA molecules, using CTP and ATP as substrates. tRNA 3'-terminal CCA addition is required both for tRNA processing and repair. Promotes tRNA repair and recycling downstream of the ribosome-associated quality control (RQC) pathway by mediating addition of the tRNA 3'-terminal CCA following cleavage by ANKZF1 and repair by ELAC1. Also involved in tRNA surveillance by mediating tandem CCA addition to generate a CCACCA at the 3' terminus of unstable tRNAs and tRNA-like transcripts. While stable tRNAs receive only 3'-terminal CCA, unstable tRNAs beginning with GG are marked with CCACCA and rapidly degraded. The structural flexibility of RNA controls the choice between CCA versus CCACCA addition: following the first CCA addition cycle, nucleotide-binding to the active site triggers a clockwise screw motion, producing torque on the RNA. This ejects stable RNAs, whereas unstable RNAs are refolded while bound to the enzyme and subjected to a second CCA catalytic cycle. This is CCA tRNA nucleotidyltransferase 1, mitochondrial (Trnt1) from Mus musculus (Mouse).